The following is a 302-amino-acid chain: MANNNNIPHDSISDPSPTDDFFEQILGLSNFSGSSGSGLSGIGGVGPPPMMLQLGSGNEGNHNHMGAIGGGGPVGFHNQMFPLGLSLDQGKGHGFLKPDETGKRFQDDVLDNRCSSMKPIFHGQPMSQPAPPMPHQQSTIRPRVRARRGQATDPHSIAERLRRERIAERIRSLQELVPTVNKTDRAAMIDEIVDYVKFLRLQVKVLSMSRLGGAGAVAPLVTEMPLSSSVEDETQAVWEKWSNDGTERQVAKLMEENVGAAMQLLQSKALCIMPISLAMAIYHSQPPDTSSSIVKPEMNPPP.

The segment at 124 to 154 (QPMSQPAPPMPHQQSTIRPRVRARRGQATDP) is disordered. One can recognise a bHLH domain in the interval 150–199 (QATDPHSIAERLRRERIAERIRSLQELVPTVNKTDRAAMIDEIVDYVKFL).

As to quaternary structure, homodimer. In terms of tissue distribution, expressed constitutively in roots, leaves, stems and flowers.

It is found in the nucleus. The sequence is that of Transcription factor bHLH7 (BHLH7) from Arabidopsis thaliana (Mouse-ear cress).